The chain runs to 308 residues: Olfactory receptor 6F1 (308 aa).

Over 1–25 (MDTGNKTLPQDFLLLGFPGSQTLQL) the chain is Extracellular. N5 carries an N-linked (GlcNAc...) asparagine glycan. Residues 26–46 (SLFMLFLVMYILTVSGNVAIL) traverse the membrane as a helical segment. Over 47–54 (MLVSTSHQ) the chain is Cytoplasmic. Residues 55-75 (LHTPMYFFLSNLSFLEIWYTT) traverse the membrane as a helical segment. Residues 76–99 (AAVPKALAILLGRSQTISFTSCLL) lie on the Extracellular side of the membrane. The cysteines at positions 97 and 189 are disulfide-linked. The chain crosses the membrane as a helical span at residues 100–120 (QMYFVFSLGCTEYFLLAAMAY). The Cytoplasmic portion of the chain corresponds to 121 to 139 (DRCLAICYPLHYGAIMSSL). A helical membrane pass occupies residues 140 to 160 (LSAQLALGSWVCGFVAIAVPT). The Extracellular portion of the chain corresponds to 161-197 (ALISGLSFCGPRAINHFFCDIAPWIALACTNTQAVEL). The helical transmembrane segment at 198–217 (VAFVIAVVVILSSCLITFVS) threads the bilayer. The Cytoplasmic segment spans residues 218–237 (YVYIISTILRIPSASGRSKA). Residues 238–258 (FSTCSSHLTVVLIWYGSTVFL) form a helical membrane-spanning segment. The Extracellular segment spans residues 259-271 (HVRTSIKDALDLI). A helical membrane pass occupies residues 272–292 (KAVHVLNTVVTPVLNPFIYTL). Residues 293–308 (RNKEVRETLLKKWKGK) lie on the Cytoplasmic side of the membrane.

It belongs to the G-protein coupled receptor 1 family.

It localises to the cell membrane. Its function is as follows. Odorant receptor. The chain is Olfactory receptor 6F1 (OR6F1) from Homo sapiens (Human).